Reading from the N-terminus, the 268-residue chain is Hydroxyethylthiazole kinase (268 aa).

Met-45 provides a ligand contact to substrate. Residues Arg-121 and Thr-167 each contribute to the ATP site. A substrate-binding site is contributed by Gly-194.

This sequence belongs to the Thz kinase family. Mg(2+) serves as cofactor.

It catalyses the reaction 5-(2-hydroxyethyl)-4-methylthiazole + ATP = 4-methyl-5-(2-phosphooxyethyl)-thiazole + ADP + H(+). It participates in cofactor biosynthesis; thiamine diphosphate biosynthesis; 4-methyl-5-(2-phosphoethyl)-thiazole from 5-(2-hydroxyethyl)-4-methylthiazole: step 1/1. Catalyzes the phosphorylation of the hydroxyl group of 4-methyl-5-beta-hydroxyethylthiazole (THZ). The protein is Hydroxyethylthiazole kinase of Bacillus thuringiensis subsp. konkukian (strain 97-27).